The chain runs to 456 residues: Kynurenine 3-monooxygenase (456 aa).

The protein belongs to the aromatic-ring hydroxylase family. KMO subfamily. FAD is required as a cofactor.

It catalyses the reaction L-kynurenine + NADPH + O2 + H(+) = 3-hydroxy-L-kynurenine + NADP(+) + H2O. The protein operates within cofactor biosynthesis; NAD(+) biosynthesis; quinolinate from L-kynurenine: step 1/3. Its function is as follows. Catalyzes the hydroxylation of L-kynurenine (L-Kyn) to form 3-hydroxy-L-kynurenine (L-3OHKyn). Required for synthesis of quinolinic acid. The polypeptide is Kynurenine 3-monooxygenase (Xanthomonas campestris pv. campestris (strain B100)).